Here is a 739-residue protein sequence, read N- to C-terminus: Lysyl oxidase homolog 3A (739 aa).

An N-terminal signal peptide occupies residues 1-25 (MLRSELRDMVVAMVLWGILLPFCLS). SRCR domains follow at residues 38–139 (FRLA…VICK), 166–272 (LRPL…VSCV), 293–393 (MRLK…VICN), and 403–511 (MRLT…VICS). Disulfide bonds link Cys64/Cys128, Cys77/Cys138, Cys108/Cys118, Cys196/Cys261, Cys209/Cys271, Cys238/Cys248, Cys318/Cys382, Cys331/Cys392, Cys362/Cys372, Cys433/Cys497, Cys446/Cys510, and Cys479/Cys489. Residue Asn256 is glycosylated (N-linked (GlcNAc...) asparagine). N-linked (GlcNAc...) asparagine glycosylation occurs at Asn468. N-linked (GlcNAc...) asparagine glycosylation occurs at Asn611. Residues 620–656 (KASFCLEDTECHEGVSKRYECANFGEQGITVGCWDLY) constitute a cross-link (lysine tyrosylquinone (Lys-Tyr)). Position 656 is a 2',4',5'-topaquinone (Tyr656).

It belongs to the lysyl oxidase family. The cofactor is Cu cation. Lysine tyrosylquinone residue is required as a cofactor. In terms of processing, the lysine tyrosylquinone cross-link (LTQ) is generated by condensation of the epsilon-amino group of a lysine with a topaquinone produced by oxidation of tyrosine.

It localises to the secreted. The protein localises to the extracellular space. Its subcellular location is the cytoplasm. It is found in the nucleus. The catalysed reaction is L-lysyl-[protein] + O2 + H2O = (S)-2-amino-6-oxohexanoyl-[protein] + H2O2 + NH4(+). The enzyme catalyses N(6)-acetyl-L-lysyl-[protein] + O2 + H2O = acetamide + (S)-2-amino-6-oxohexanoyl-[protein] + H2O2. Functionally, protein-lysine 6-oxidase that mediates the oxidation of peptidyl lysine residues to allysine in target proteins. Catalyzes the post-translational oxidative deamination of peptidyl lysine residues in precursors of elastin and different types of collagens, a prerequisite in the formation of cross-links between collagens and elastin. Can mediate oxidation of lysine residues that are acetylated. Also able to catalyze deacetylation of lysine residues. This Danio rerio (Zebrafish) protein is Lysyl oxidase homolog 3A.